The primary structure comprises 260 residues: 3'-5' ssDNA/RNA exonuclease TatD (260 aa).

A divalent metal cation contacts are provided by Glu91, His127, and His152.

Belongs to the metallo-dependent hydrolases superfamily. TatD-type hydrolase family. TatD subfamily. Monomer. Mg(2+) is required as a cofactor.

Its subcellular location is the cytoplasm. Its function is as follows. 3'-5' exonuclease that prefers single-stranded DNA and RNA. May play a role in the H(2)O(2)-induced DNA damage repair. The chain is 3'-5' ssDNA/RNA exonuclease TatD from Shigella flexneri serotype 5b (strain 8401).